The sequence spans 156 residues: Holliday junction resolvase (156 aa).

It belongs to the RuvC family. Poxviruses-type subfamily. The cofactor is Mg(2+).

Nuclease that specifically cleaves and resolves four-way DNA Holliday junctions into linear duplex products. The sequence is that of Holliday junction resolvase from Vertebrata (FPV).